A 251-amino-acid chain; its full sequence is Cell division protein ZapD (251 aa).

It belongs to the ZapD family. In terms of assembly, interacts with FtsZ.

Its subcellular location is the cytoplasm. Its function is as follows. Cell division factor that enhances FtsZ-ring assembly. Directly interacts with FtsZ and promotes bundling of FtsZ protofilaments, with a reduction in FtsZ GTPase activity. The polypeptide is Cell division protein ZapD (Burkholderia mallei (strain NCTC 10247)).